Consider the following 292-residue polypeptide: Elongation factor Ts (292 aa).

The segment at 79-82 (TDFV) is involved in Mg(2+) ion dislocation from EF-Tu.

The protein belongs to the EF-Ts family.

The protein localises to the cytoplasm. In terms of biological role, associates with the EF-Tu.GDP complex and induces the exchange of GDP to GTP. It remains bound to the aminoacyl-tRNA.EF-Tu.GTP complex up to the GTP hydrolysis stage on the ribosome. The chain is Elongation factor Ts from Xanthomonas campestris pv. campestris (strain ATCC 33913 / DSM 3586 / NCPPB 528 / LMG 568 / P 25).